Reading from the N-terminus, the 769-residue chain is MGPNPGPKAQPAPIRGFGVKIDQYTNDVDLKDEANVKLWEAIGDHISLVTKFLAGGGPTDYGAGGKPLLFCGAEAGVHQPWDTSIVKDHEGKNVVTDRDPKTKMPTKYLNLGLAFMGVSRNPNANAFWMSKFDGYDLDYDDDTSLCAENPKDGRLRYAKVAKRPFIRYTKMRLPPLATAIPLAVVWASLASVINANKAANALLASISVSTVSGTAPGRPTELVSAQEAILAGDYTKRLHYQGRDVCPVGCSNAGIDTSSWFVYGSLNRLDRACDRPMLLDFALANPIDTQKSHVAISACTADYENFSSFVPSSDSATSCASKVAEQAEVTFPLLLKSSGASSSQHVADVTSALEQLQAFAILSNSGCNETIKYFYSGDVIVGVYAGSGLAGQGVLSTVLEKLSTRIKDDGSVAESWSVEMCSNSSARYSLSVLVNTKGKFGAVQRGLQASKNGTCFSTETEIAASDWETVTYLAASASSITSTANPNKLTSYRATACRTIQVVSGDSCASLATQCGITAAQFTKYNSDPSLCSGLTPGKHVCCSPGTLPDFTPKPSADGYCYSNLVKSGDSCASLAAANDLTNAKIESFNKMTWGWNGCEKPFAKYKICLSTGYPPMPATIPNAVCGPQVNDTVKAPPETDLSTLNECPLNACCNIWGQCGTTGDFCTPSNSSTGAPGTAAPGKNGCISNCGTNIVTSSAPGKTYNVSYHDLGGRPPRPPFGEYNSKDSRIPANFSCERVVQLAMEMGHSTIVQLLIDAGADTSLPHPL.

A helical membrane pass occupies residues 173–193 (LPPLATAIPLAVVWASLASVI). N-linked (GlcNAc...) asparagine glycosylation is found at Asn-305, Asn-368, Asn-423, and Asn-452. LysM domains follow at residues 498–543 (RTIQ…HVCC) and 562–610 (YSNL…KICL). N-linked (GlcNAc...) asparagine glycosylation is found at Asn-631, Asn-671, Asn-706, and Asn-734.

The protein belongs to the secreted LysM effector family.

It is found in the membrane. Its function is as follows. Non-secreted LysM effector that might be involved in manipulation of host defenses for successful infection. The protein is Non-secreted LysM effector LysM17 of Penicillium expansum (Blue mold rot fungus).